Reading from the N-terminus, the 269-residue chain is Putative 12-oxophytodienoate reductase-like protein 2A (269 aa).

FMN-binding positions include 28 to 30 (PLT) and Gln103. 175–178 (HGAH) contributes to the substrate binding site. Tyr180 functions as the Proton donor in the catalytic mechanism. Arg227 is a binding site for FMN.

Belongs to the NADH:flavin oxidoreductase/NADH oxidase family. FMN serves as cofactor.

In terms of biological role, putative oxophytodienoate reductase that may be involved in the biosynthesis or metabolism of oxylipin signaling molecules. In Arabidopsis thaliana (Mouse-ear cress), this protein is Putative 12-oxophytodienoate reductase-like protein 2A.